The primary structure comprises 237 residues: Phosphatidylserine decarboxylase proenzyme (237 aa).

S206 serves as the catalytic Schiff-base intermediate with substrate; via pyruvic acid. S206 is modified (pyruvic acid (Ser); by autocatalysis).

The protein belongs to the phosphatidylserine decarboxylase family. PSD-A subfamily. Heterodimer of a large membrane-associated beta subunit and a small pyruvoyl-containing alpha subunit. The cofactor is pyruvate. In terms of processing, is synthesized initially as an inactive proenzyme. Formation of the active enzyme involves a self-maturation process in which the active site pyruvoyl group is generated from an internal serine residue via an autocatalytic post-translational modification. Two non-identical subunits are generated from the proenzyme in this reaction, and the pyruvate is formed at the N-terminus of the alpha chain, which is derived from the carboxyl end of the proenzyme. The post-translation cleavage follows an unusual pathway, termed non-hydrolytic serinolysis, in which the side chain hydroxyl group of the serine supplies its oxygen atom to form the C-terminus of the beta chain, while the remainder of the serine residue undergoes an oxidative deamination to produce ammonia and the pyruvoyl prosthetic group on the alpha chain.

It is found in the cell membrane. It carries out the reaction a 1,2-diacyl-sn-glycero-3-phospho-L-serine + H(+) = a 1,2-diacyl-sn-glycero-3-phosphoethanolamine + CO2. Its pathway is phospholipid metabolism; phosphatidylethanolamine biosynthesis; phosphatidylethanolamine from CDP-diacylglycerol: step 2/2. Catalyzes the formation of phosphatidylethanolamine (PtdEtn) from phosphatidylserine (PtdSer). The polypeptide is Phosphatidylserine decarboxylase proenzyme (Rhodococcus erythropolis (strain PR4 / NBRC 100887)).